The sequence spans 652 residues: WD repeat-containing protein 70 (652 aa).

Disordered stretches follow at residues 1-22 and 45-171; these read MERP…LAVT and RRTA…IPDS. Residues 45–76 are compositionally biased toward basic and acidic residues; that stretch reads RRTAVERSRKTLEAREREEEMNREKELRRQNE. Low complexity predominate over residues 92 to 102; the sequence is SKSSSRDTSSS. Composition is skewed to acidic residues over residues 103-115 and 146-162; these read ESDE…DDEL and EDVE…EEEE. WD repeat units follow at residues 178–217, 225–266, 279–319, 328–367, 374–413, 419–464, and 467–506; these read HGTK…ASFK, CECH…ECIK, GHTA…KQKS, GKKV…HPKF, DPGT…KPLF, PTMF…RVYE, and ITDA…QRGA. A Glycyl lysine isopeptide (Lys-Gly) (interchain with G-Cter in SUMO2) cross-link involves residue Lys-294. Lys-450 carries the N6-acetyllysine modification. Positions 538–563 are enriched in basic and acidic residues; sequence REPRQRSTRKQLEKDRLDPLKSHKPE. Residues 538–577 are disordered; that stretch reads REPRQRSTRKQLEKDRLDPLKSHKPEPPVAGPGRGGRVGT. Position 577 is a phosphothreonine (Thr-577). Glycyl lysine isopeptide (Lys-Gly) (interchain with G-Cter in SUMO2) cross-links involve residues Lys-588 and Lys-594. Ser-619 and Ser-636 each carry phosphoserine. The disordered stretch occupies residues 629 to 652; it reads TMFAQVESDDEETKNEPEWKKRKI. Positions 642–652 are enriched in basic and acidic residues; that stretch reads KNEPEWKKRKI.

The protein belongs to the WD repeat GAD-1 family.

The protein is WD repeat-containing protein 70 (WDR70) of Bos taurus (Bovine).